Consider the following 197-residue polypeptide: Guanylate kinase (197 aa).

In terms of domain architecture, Guanylate kinase-like spans 6 to 191; it reads SKLIILSGPS…CVAQIEKIIS (186 aa). 13–20 is a binding site for ATP; it reads GPSGVGKG.

The protein belongs to the guanylate kinase family.

It localises to the cytoplasm. It catalyses the reaction GMP + ATP = GDP + ADP. Essential for recycling GMP and indirectly, cGMP. The chain is Guanylate kinase from Mesomycoplasma hyopneumoniae (strain 232) (Mycoplasma hyopneumoniae).